A 509-amino-acid chain; its full sequence is ATP synthase subunit alpha (509 aa).

169–176 (GDRQTGKT) contributes to the ATP binding site.

The protein belongs to the ATPase alpha/beta chains family. F-type ATPases have 2 components, CF(1) - the catalytic core - and CF(0) - the membrane proton channel. CF(1) has five subunits: alpha(3), beta(3), gamma(1), delta(1), epsilon(1). CF(0) has three main subunits: a(1), b(2) and c(9-12). The alpha and beta chains form an alternating ring which encloses part of the gamma chain. CF(1) is attached to CF(0) by a central stalk formed by the gamma and epsilon chains, while a peripheral stalk is formed by the delta and b chains.

Its subcellular location is the cell inner membrane. It catalyses the reaction ATP + H2O + 4 H(+)(in) = ADP + phosphate + 5 H(+)(out). Functionally, produces ATP from ADP in the presence of a proton gradient across the membrane. The alpha chain is a regulatory subunit. This is ATP synthase subunit alpha from Parvibaculum lavamentivorans (strain DS-1 / DSM 13023 / NCIMB 13966).